Reading from the N-terminus, the 223-residue chain is dITP/XTP pyrophosphatase (223 aa).

Threonine 9–lysine 14 is a substrate binding site. Aspartate 71 (proton acceptor) is an active-site residue. Aspartate 71 contacts Mg(2+). Substrate contacts are provided by residues serine 72, phenylalanine 152–aspartate 155, lysine 175, and histidine 180–arginine 181. The interval leucine 203–lysine 223 is disordered.

It belongs to the HAM1 NTPase family. Homodimer. The cofactor is Mg(2+).

The catalysed reaction is XTP + H2O = XMP + diphosphate + H(+). It catalyses the reaction dITP + H2O = dIMP + diphosphate + H(+). It carries out the reaction ITP + H2O = IMP + diphosphate + H(+). Pyrophosphatase that catalyzes the hydrolysis of nucleoside triphosphates to their monophosphate derivatives, with a high preference for the non-canonical purine nucleotides XTP (xanthosine triphosphate), dITP (deoxyinosine triphosphate) and ITP. Seems to function as a house-cleaning enzyme that removes non-canonical purine nucleotides from the nucleotide pool, thus preventing their incorporation into DNA/RNA and avoiding chromosomal lesions. The chain is dITP/XTP pyrophosphatase from Desulfotalea psychrophila (strain LSv54 / DSM 12343).